Here is a 71-residue protein sequence, read N- to C-terminus: Translation initiation factor IF-1 (71 aa).

The 71-residue stretch at 1–71 (MSKDDLIQFT…LTKGRVIHRH (71 aa)) folds into the S1-like domain.

It belongs to the IF-1 family. Component of the 30S ribosomal translation pre-initiation complex which assembles on the 30S ribosome in the order IF-2 and IF-3, IF-1 and N-formylmethionyl-tRNA(fMet); mRNA recruitment can occur at any time during PIC assembly.

Its subcellular location is the cytoplasm. Functionally, one of the essential components for the initiation of protein synthesis. Stabilizes the binding of IF-2 and IF-3 on the 30S subunit to which N-formylmethionyl-tRNA(fMet) subsequently binds. Helps modulate mRNA selection, yielding the 30S pre-initiation complex (PIC). Upon addition of the 50S ribosomal subunit IF-1, IF-2 and IF-3 are released leaving the mature 70S translation initiation complex. In Rickettsia prowazekii (strain Madrid E), this protein is Translation initiation factor IF-1.